The primary structure comprises 363 residues: tRNA N6-adenosine threonylcarbamoyltransferase (363 aa).

Fe cation is bound by residues H121 and H125. Residues 143 to 147, D176, G189, and N287 each bind substrate; that span reads LASGG. D315 provides a ligand contact to Fe cation.

Belongs to the KAE1 / TsaD family. Fe(2+) is required as a cofactor.

Its subcellular location is the cytoplasm. The enzyme catalyses L-threonylcarbamoyladenylate + adenosine(37) in tRNA = N(6)-L-threonylcarbamoyladenosine(37) in tRNA + AMP + H(+). In terms of biological role, required for the formation of a threonylcarbamoyl group on adenosine at position 37 (t(6)A37) in tRNAs that read codons beginning with adenine. Is involved in the transfer of the threonylcarbamoyl moiety of threonylcarbamoyl-AMP (TC-AMP) to the N6 group of A37, together with TsaE and TsaB. TsaD likely plays a direct catalytic role in this reaction. The sequence is that of tRNA N6-adenosine threonylcarbamoyltransferase from Rhodopseudomonas palustris (strain BisA53).